The primary structure comprises 174 residues: Transcription antitermination protein NusB (174 aa).

Residues 1–28 (MVEPKKPFMRKPPPKTGDKKPGDRKANR) form a disordered region. The span at 16 to 25 (TGDKKPGDRK) shows a compositional bias: basic and acidic residues.

The protein belongs to the NusB family.

In terms of biological role, involved in transcription antitermination. Required for transcription of ribosomal RNA (rRNA) genes. Binds specifically to the boxA antiterminator sequence of the ribosomal RNA (rrn) operons. This Rhodopseudomonas palustris (strain BisB5) protein is Transcription antitermination protein NusB.